The chain runs to 888 residues: 3-hydroxy-3-methylglutaryl-coenzyme A reductase (888 aa).

Over 1–9 the chain is Cytoplasmic; sequence MLSRLFRMH. Residues 10–39 traverse the membrane as a helical segment; the sequence is GLFVASHPWEVIVGTVTLTICMMSMNMFTG. The Lumenal segment spans residues 40 to 56; it reads NNKICGWNYECPKLEED. The chain crosses the membrane as a helical span at residues 57–78; it reads VLSSDIIILTITRCIAILYIYF. Residues 61-218 enclose the SSD domain; the sequence is DIIILTITRC…MTFFPACVSL (158 aa). The INSIG-binding motif signature appears at 75–78; it reads YIYF. Topologically, residues 79–89 are cytoplasmic; that stretch reads QFQNLRQLGSK. Lys89 is covalently cross-linked (Glycyl lysine isopeptide (Lys-Gly) (interchain with G-Cter in ubiquitin)). Residues 90 to 114 traverse the membrane as a helical segment; that stretch reads YILGIAGLFTIFSSFVFSTVVIHFL. Residues 115–123 lie on the Lumenal side of the membrane; sequence DKELTGLNE. The chain crosses the membrane as a helical span at residues 124–149; it reads ALPFFLLLVDLSRASALAKFALSSNS. Residues 150 to 159 lie on the Cytoplasmic side of the membrane; it reads QDEVRENIAR. A helical transmembrane segment spans residues 160–187; it reads GMAILGPTFTLDALVECLVIGVGTMSGV. Residues 188-191 are Lumenal-facing; the sequence is RQLE. A helical membrane pass occupies residues 192 to 220; the sequence is IMCCFGCMSVLANYFVFMTFFPACVSLVL. Over 221–248 the chain is Cytoplasmic; the sequence is ELSRESREGRPIWQLSHFARVLEEEENK. Lys248 is covalently cross-linked (Glycyl lysine isopeptide (Lys-Gly) (interchain with G-Cter in ubiquitin)). The chain crosses the membrane as a helical span at residues 249–275; the sequence is PNPVTQRVKMIMSLGLVLVHAHSRWIA. Over 276–314 the chain is Lumenal; the sequence is DPSPQNSTADNSKVSLGLDENVSKRIEPSVSLWQFYLSK. Residues Asn281 and Asn296 are each glycosylated (N-linked (GlcNAc...) asparagine). Residues 315 to 339 traverse the membrane as a helical segment; it reads MISMDIEQVITLSLALLLAVKYIFF. At 340-888 the chain is on the cytoplasmic side; sequence EQAETESTLS…LQGTCTKKAA (549 aa). Catalysis depends on charge relay system residues Glu559, Lys691, and Asp767. His866 (proton donor) is an active-site residue. A Phosphoserine; by AMPK modification is found at Ser872.

The protein belongs to the HMG-CoA reductase family. In terms of assembly, homotetramer. Homodimer. Interacts (via its SSD) with INSIG1; the interaction, accelerated by sterols, leads to the recruitment of HMGCR to AMFR/gp78 for its ubiquitination by the sterol-mediated ERAD pathway. Interacts with UBIAD1. Undergoes sterol-mediated ubiquitination and ER-associated degradation (ERAD). Accumulation of sterols in the endoplasmic reticulum (ER) membrane, triggers binding of the reductase to the ER membrane protein INSIG1 or INSIG2. The INSIG1 binding leads to the recruitment of the ubiquitin ligase, AMFR/gp78, RNF139 or RNF145, initiating ubiquitination of the reductase. The ubiquitinated reductase is then extracted from the ER membrane and delivered to cytosolic 26S proteosomes by a mechanism probably mediated by the ATPase Valosin-containing protein VCP/p97. The INSIG2-binding leads to the recruitment of the ubiquitin ligase RNF139, initiating ubiquitination of the reductase. Lys-248 is the main site of ubiquitination. Ubiquitination is enhanced by the presence of a geranylgeranylated protein. In terms of processing, N-glycosylated. Deglycosylated by NGLY1 on release from the endoplasmic reticulum (ER) in a sterol-mediated manner. Post-translationally, phosphorylated. Phosphorylation at Ser-872 reduces the catalytic activity.

It is found in the endoplasmic reticulum membrane. The protein resides in the peroxisome membrane. It carries out the reaction (R)-mevalonate + 2 NADP(+) + CoA = (3S)-3-hydroxy-3-methylglutaryl-CoA + 2 NADPH + 2 H(+). It functions in the pathway metabolic intermediate biosynthesis; (R)-mevalonate biosynthesis; (R)-mevalonate from acetyl-CoA: step 3/3. Regulated by a negative feedback mechanism through sterols and non-sterol metabolites derived from mevalonate. Phosphorylation at Ser-872 down-regulates the catalytic activity. Catalyzes the conversion of (3S)-hydroxy-3-methylglutaryl-CoA (HMG-CoA) to mevalonic acid, the rate-limiting step in the synthesis of cholesterol and other isoprenoids, thus plays a critical role in cellular cholesterol homeostasis. The sequence is that of 3-hydroxy-3-methylglutaryl-coenzyme A reductase (HMGCR) from Bos taurus (Bovine).